Reading from the N-terminus, the 318-residue chain is Porphobilinogen deaminase (318 aa).

Position 241 is an S-(dipyrrolylmethanemethyl)cysteine (C241).

This sequence belongs to the HMBS family. In terms of assembly, monomer. Dipyrromethane serves as cofactor.

The catalysed reaction is 4 porphobilinogen + H2O = hydroxymethylbilane + 4 NH4(+). The protein operates within porphyrin-containing compound metabolism; protoporphyrin-IX biosynthesis; coproporphyrinogen-III from 5-aminolevulinate: step 2/4. Its function is as follows. Tetrapolymerization of the monopyrrole PBG into the hydroxymethylbilane pre-uroporphyrinogen in several discrete steps. This chain is Porphobilinogen deaminase, found in Geobacter metallireducens (strain ATCC 53774 / DSM 7210 / GS-15).